The sequence spans 313 residues: Probable GTP 3',8-cyclase (313 aa).

One can recognise a Radical SAM core domain in the interval 4–224 (RFGRSIEDLR…EIRSKHYRPR (221 aa)). Position 13 (R13) interacts with GTP. 3 residues coordinate [4Fe-4S] cluster: C20, C24, and C27. K60 contributes to the GTP binding site. G64 provides a ligand contact to S-adenosyl-L-methionine. T90 serves as a coordination point for GTP. S114 serves as a coordination point for S-adenosyl-L-methionine. K151 serves as a coordination point for GTP. Positions 244 and 247 each coordinate [4Fe-4S] cluster. 249–251 (RIR) is a binding site for GTP. C261 lines the [4Fe-4S] cluster pocket.

The protein belongs to the radical SAM superfamily. MoaA family. [4Fe-4S] cluster is required as a cofactor.

The enzyme catalyses GTP + AH2 + S-adenosyl-L-methionine = (8S)-3',8-cyclo-7,8-dihydroguanosine 5'-triphosphate + 5'-deoxyadenosine + L-methionine + A + H(+). The protein operates within cofactor biosynthesis; molybdopterin biosynthesis. In terms of biological role, catalyzes the cyclization of GTP to (8S)-3',8-cyclo-7,8-dihydroguanosine 5'-triphosphate. This chain is Probable GTP 3',8-cyclase, found in Sulfurisphaera tokodaii (strain DSM 16993 / JCM 10545 / NBRC 100140 / 7) (Sulfolobus tokodaii).